The sequence spans 282 residues: 4-hydroxybenzoate octaprenyltransferase (282 aa).

9 helical membrane passes run 17 to 37 (IGIL…NQGF), 40 to 60 (IDLL…GCVI), 90 to 110 (AFIL…KLPI), 113 to 133 (FYFA…KRFL), 135 to 155 (APQL…FIAS), 163 to 183 (FVVL…MYAM), 207 to 227 (LIIA…AINK), 231 to 251 (WFFY…LKLI), and 262 to 282 (AFLV…LALI).

Belongs to the UbiA prenyltransferase family. Mg(2+) is required as a cofactor.

The protein localises to the cell inner membrane. The enzyme catalyses all-trans-octaprenyl diphosphate + 4-hydroxybenzoate = 4-hydroxy-3-(all-trans-octaprenyl)benzoate + diphosphate. It participates in cofactor biosynthesis; ubiquinone biosynthesis. In terms of biological role, catalyzes the prenylation of para-hydroxybenzoate (PHB) with an all-trans polyprenyl group. Mediates the second step in the final reaction sequence of ubiquinone-8 (UQ-8) biosynthesis, which is the condensation of the polyisoprenoid side chain with PHB, generating the first membrane-bound Q intermediate 3-octaprenyl-4-hydroxybenzoate. The chain is 4-hydroxybenzoate octaprenyltransferase from Legionella pneumophila (strain Paris).